The sequence spans 104 residues: Protein KleF (104 aa).

In Escherichia coli, this protein is Protein KleF (kleF).